The following is a 184-amino-acid chain: Photosystem I assembly protein Ycf4 (184 aa).

2 consecutive transmembrane segments (helical) span residues 22–42 (FCWAFILFLGSLGFLLVGTSS) and 57–77 (IIFFPQGIVMSFYGIAGLFIS).

Belongs to the Ycf4 family.

Its subcellular location is the plastid. It localises to the chloroplast thylakoid membrane. Seems to be required for the assembly of the photosystem I complex. This Platanus occidentalis (Sycamore) protein is Photosystem I assembly protein Ycf4.